The sequence spans 620 residues: Chaperone protein HscA homolog (620 aa).

Belongs to the heat shock protein 70 family.

Chaperone involved in the maturation of iron-sulfur cluster-containing proteins. Has a low intrinsic ATPase activity which is markedly stimulated by HscB. In Pseudomonas putida (strain ATCC 47054 / DSM 6125 / CFBP 8728 / NCIMB 11950 / KT2440), this protein is Chaperone protein HscA homolog.